Reading from the N-terminus, the 205-residue chain is Beta-crystallin B2 (205 aa).

N-acetylalanine is present on Ala-2. The tract at residues 2–16 is N-terminal arm; it reads ASDHQTQAGKPQPLN. Beta/gamma crystallin 'Greek key' domains are found at residues 17 to 56 and 57 to 101; these read PKII…LVQA and GPWV…RPIK. A connecting peptide region spans residues 102 to 106; that stretch reads VDSQE. 2 consecutive Beta/gamma crystallin 'Greek key' domains span residues 107–148 and 149–191; these read HKII…RVQS and GTWV…RRIR. The tract at residues 193-205 is C-terminal arm; it reads MQWHQRGAFHPSS.

It belongs to the beta/gamma-crystallin family. In terms of assembly, homo/heterodimer, or complexes of higher-order. The structure of beta-crystallin oligomers seems to be stabilized through interactions between the N-terminal arms.

In terms of biological role, crystallins are the dominant structural components of the vertebrate eye lens. The polypeptide is Beta-crystallin B2 (CRYBB2) (Mesocricetus auratus (Golden hamster)).